A 648-amino-acid polypeptide reads, in one-letter code: DNA gyrase subunit B (648 aa).

Residues 427-541 enclose the Toprim domain; sequence TELFIVEGDS…AGYVYIAQPP (115 aa). Mg(2+)-binding residues include glutamate 433, aspartate 506, and aspartate 508.

It belongs to the type II topoisomerase GyrB family. Heterotetramer, composed of two GyrA and two GyrB chains. In the heterotetramer, GyrA contains the active site tyrosine that forms a transient covalent intermediate with DNA, while GyrB binds cofactors and catalyzes ATP hydrolysis. Mg(2+) is required as a cofactor. Mn(2+) serves as cofactor. Requires Ca(2+) as cofactor.

It is found in the cytoplasm. The catalysed reaction is ATP-dependent breakage, passage and rejoining of double-stranded DNA.. In terms of biological role, a type II topoisomerase that negatively supercoils closed circular double-stranded (ds) DNA in an ATP-dependent manner to modulate DNA topology and maintain chromosomes in an underwound state. Negative supercoiling favors strand separation, and DNA replication, transcription, recombination and repair, all of which involve strand separation. Also able to catalyze the interconversion of other topological isomers of dsDNA rings, including catenanes and knotted rings. Type II topoisomerases break and join 2 DNA strands simultaneously in an ATP-dependent manner. The chain is DNA gyrase subunit B from Streptococcus pneumoniae serotype 4 (strain ATCC BAA-334 / TIGR4).